A 192-amino-acid chain; its full sequence is Ciliary microtubule-associated protein 3 (192 aa).

Interacts with proteins involved in ciliary transport, including ARL13B, CETN1, KIF3A, RAB6A, RAB8A, TUBB1 and TUBG1. Interacts with AURKA.

It is found in the cytoplasmic vesicle. Its subcellular location is the golgi apparatus. The protein localises to the trans-Golgi network. It localises to the cytoplasm. During primary cilia disassembly, involved in cilia disassembly. Required specifically to control cilia retraction as well as the liberation and duplication of the basal body/centrosome. May act by stimulating AURKA activity at the basal body in a cell cycle-dependent manner. This Bos taurus (Bovine) protein is Ciliary microtubule-associated protein 3 (CIMAP3).